Here is a 177-residue protein sequence, read N- to C-terminus: UPF0178 protein TP_0845 (177 aa).

The disordered stretch occupies residues E155–R177.

This sequence belongs to the UPF0178 family.

The sequence is that of UPF0178 protein TP_0845 from Treponema pallidum (strain Nichols).